Consider the following 1495-residue polypeptide: Ras GTPase-activating-like protein IQG1 (1495 aa).

Residues 108-221 (LCRVSEVKIW…ILISMINKKW (114 aa)) enclose the Calponin-homology (CH) domain. Thr264 is modified (phosphothreonine). Position 268 is a phosphoserine (Ser268). Thr299 bears the Phosphothreonine mark. 7 IQ domains span residues 447–467 (EQDI…VLSS), 538–567 (SHYP…KLND), 568–597 (ERES…AVHD), 599–628 (HKEN…SLGK), 629–658 (ENCN…PENN), 687–716 (EYNN…FYKR), and 717–746 (NVRS…CPNP). Residues 759–798 (NGTATIEEVQNQLESCQASLDSENMKKERLLKSIRQQLNI) adopt a coiled-coil conformation. Positions 876–1100 (SYFTRFVCEM…PHIKDVLYNV (225 aa)) constitute a Ras-GAP domain.

Interacts with AFR1. Interacts with AKR1. Interacts with activated CDC42. Interacts with calmodulin CMD1. Interacts with myosin MYO1 and its light chain MLC1. Interacts with BUD4. Interacts with INN1. Interacts with SEC3. Interacts with TEM1.

The protein localises to the bud neck. Its function is as follows. Required for the assembly and the contraction of the actomyosin ring at the bud neck during cytokinesis. Seems to be involved in additional tasks during cell division like axial bud-site selection and targeted secretion by recruiting the spatial landmark BUD4, the septin CDC12 and the secretion landmark SEC3 to the bud neck. May be regulated by calcium ions. The protein is Ras GTPase-activating-like protein IQG1 (IQG1) of Saccharomyces cerevisiae (strain ATCC 204508 / S288c) (Baker's yeast).